The primary structure comprises 427 residues: MTAIVDIIGREILDSRGNPTVEVDVVLEDGALGRAAVPSGASTGAHEAVELRDGDASRYLGKGVGMAVDAVNGEIFDAIGGYEAEDQAHIDAALLALDGTPNKGRLGANAILGVSLAVAKAAAESKGLPLYRYVGGVNARVLPVPMMNIINGGAHADNPIDFQEFMILPAGAPSFAEGLRWGAEIFHTLKKGLKDAGHNTNVGDEGGFAPNLASAEAALEFVLKAIEKAGFKPGEDVYLGLDCASTEFFKNGVYNYEGEGTVRDIEAQVAYLAELVAKYPIVTIEDGMAEDDWVGWKLLTDTVGSKCQLVGDDLFVTNVERLSRGIKDGVGNSILVKVNQIGSLTETLDAVEMAHKAGYRAVMSHRSGETEDATIADLAVATNCGQIKTGSLARSDRTAKYNQLLRIEQELGDSARYAGKAALKALA.

Gln163 serves as a coordination point for (2R)-2-phosphoglycerate. The active-site Proton donor is Glu205. Residues Asp242, Glu285, and Asp312 each contribute to the Mg(2+) site. Lys337, Arg366, Ser367, and Lys388 together coordinate (2R)-2-phosphoglycerate. The active-site Proton acceptor is Lys337.

It belongs to the enolase family. Requires Mg(2+) as cofactor.

It localises to the cytoplasm. The protein resides in the secreted. The protein localises to the cell surface. It catalyses the reaction (2R)-2-phosphoglycerate = phosphoenolpyruvate + H2O. The protein operates within carbohydrate degradation; glycolysis; pyruvate from D-glyceraldehyde 3-phosphate: step 4/5. Functionally, catalyzes the reversible conversion of 2-phosphoglycerate (2-PG) into phosphoenolpyruvate (PEP). It is essential for the degradation of carbohydrates via glycolysis. The protein is Enolase of Xanthobacter autotrophicus (strain ATCC BAA-1158 / Py2).